Here is a 216-residue protein sequence, read N- to C-terminus: Glutathione S-transferase D5 (216 aa).

The GST N-terminal domain maps to 1–80 (MDFYYSPRGS…YLVEKYGKDD (80 aa)). Residues 50-52 (HTI) and 64-66 (ESR) contribute to the glutathione site. The GST C-terminal domain occupies 86 to 207 (DPKKQALVNQ…KGAVELKGVF (122 aa)).

Belongs to the GST superfamily. Delta family. As to quaternary structure, homodimer.

The enzyme catalyses RX + glutathione = an S-substituted glutathione + a halide anion + H(+). Conjugation of reduced glutathione to a wide number of exogenous and endogenous hydrophobic electrophiles. May be involved in detoxification. In Drosophila melanogaster (Fruit fly), this protein is Glutathione S-transferase D5.